Here is a 500-residue protein sequence, read N- to C-terminus: NAD(P)H-quinone oxidoreductase chain 4, chloroplastic (500 aa).

A run of 14 helical transmembrane segments spans residues 4–24, 35–55, 87–107, 113–130, 134–154, 167–187, 211–231, 242–262, 272–292, 305–325, 330–350, 386–406, 416–436, and 462–482; these read FPWL…MLFL, YTIC…CYNF, IGTI…AFPV, LFHF…GSFS, LLLF…LLSM, FILY…GISL, ILFY…IPLH, HYST…YGLV, AHSM…IYAA, IAYS…SITD, GAIL…FLAG, LALP…GIIT, ILII…LLSM, and LFLS…PDFV.

The protein belongs to the complex I subunit 4 family.

It localises to the plastid. Its subcellular location is the chloroplast thylakoid membrane. The enzyme catalyses a plastoquinone + NADH + (n+1) H(+)(in) = a plastoquinol + NAD(+) + n H(+)(out). It catalyses the reaction a plastoquinone + NADPH + (n+1) H(+)(in) = a plastoquinol + NADP(+) + n H(+)(out). The polypeptide is NAD(P)H-quinone oxidoreductase chain 4, chloroplastic (Olimarabidopsis pumila (Dwarf rocket)).